The sequence spans 98 residues: High mobility group nucleosome-binding domain-containing protein 3 (98 aa).

Basic and acidic residues-rich tracts occupy residues 1–25, 39–52, 61–71, and 80–98; these read MPKR…EPTR, PEPK…KEPG, GKKDEKQEAAK, and GENK…DKNE. The disordered stretch occupies residues 1–98; it reads MPKRKSPEGA…KTESVGDKNE (98 aa).

Belongs to the HMGN family.

It localises to the nucleus. In Gallus gallus (Chicken), this protein is High mobility group nucleosome-binding domain-containing protein 3 (HMGN3).